Consider the following 674-residue polypeptide: Multifunctional alkene reductase/demethylase OYE (674 aa).

2 residues coordinate FMN: Gly62 and Gln105. His175 serves as the catalytic Proton donor. 2 residues coordinate FMN: Arg223 and Lys299. Residues Cys345, Cys351, and Cys358 each coordinate [4Fe-4S] cluster. Residues Ala391, Gln418, and Arg428 each contribute to the FAD site.

The protein in the N-terminal section; belongs to the NADH:flavin oxidoreductase/NADH oxidase family. Requires [4Fe-4S] cluster as cofactor. The cofactor is FAD. FMN is required as a cofactor.

The enzyme catalyses 3-phenylpropanoate + NAD(+) = (E)-cinnamate + NADH + H(+). It carries out the reaction N-methyl-L-proline + NAD(+) + H2O = L-proline + formaldehyde + NADH + H(+). Functionally, a member of the 2-enoate reductase subfamily of old yellow enzymes (OYE) able to reduce alpha/beta alkenes near electron-withdrawing groups as well as perform oxidative demethylation chemistry. Prefers NADH over NADPH as cosubstrate. May play a role in osmotic stress response in situ. The protein is Multifunctional alkene reductase/demethylase OYE of Caballeronia cordobensis (Burkholderia cordobensis).